The sequence spans 225 residues: Ribose-5-phosphate isomerase A (225 aa).

Substrate contacts are provided by residues 26 to 29 (TGST), 82 to 85 (DGAD), and 95 to 98 (KGGG). The Proton acceptor role is filled by Glu104. Lys122 is a substrate binding site.

The protein belongs to the ribose 5-phosphate isomerase family. In terms of assembly, homodimer.

It carries out the reaction aldehydo-D-ribose 5-phosphate = D-ribulose 5-phosphate. It functions in the pathway carbohydrate degradation; pentose phosphate pathway; D-ribose 5-phosphate from D-ribulose 5-phosphate (non-oxidative stage): step 1/1. Functionally, catalyzes the reversible conversion of ribose-5-phosphate to ribulose 5-phosphate. This chain is Ribose-5-phosphate isomerase A, found in Streptococcus gordonii (strain Challis / ATCC 35105 / BCRC 15272 / CH1 / DL1 / V288).